The chain runs to 189 residues: Peptidyl-tRNA hydrolase (189 aa).

A tRNA-binding site is contributed by Tyr14. The active-site Proton acceptor is the His19. Positions 64, 66, and 112 each coordinate tRNA.

This sequence belongs to the PTH family. Monomer.

The protein localises to the cytoplasm. The enzyme catalyses an N-acyl-L-alpha-aminoacyl-tRNA + H2O = an N-acyl-L-amino acid + a tRNA + H(+). In terms of biological role, hydrolyzes ribosome-free peptidyl-tRNAs (with 1 or more amino acids incorporated), which drop off the ribosome during protein synthesis, or as a result of ribosome stalling. Functionally, catalyzes the release of premature peptidyl moieties from peptidyl-tRNA molecules trapped in stalled 50S ribosomal subunits, and thus maintains levels of free tRNAs and 50S ribosomes. The sequence is that of Peptidyl-tRNA hydrolase from Erythrobacter litoralis (strain HTCC2594).